A 256-amino-acid polypeptide reads, in one-letter code: 5-keto-4-deoxy-D-glucarate aldolase (256 aa).

Residue histidine 50 is the Proton acceptor of the active site. A substrate-binding site is contributed by glutamine 151. Mg(2+) is bound at residue glutamate 153. Substrate-binding residues include serine 178 and aspartate 179. A Mg(2+)-binding site is contributed by aspartate 179.

It belongs to the HpcH/HpaI aldolase family. KDGluc aldolase subfamily. In terms of assembly, homohexamer; trimer of dimers. Mg(2+) serves as cofactor.

It catalyses the reaction 5-dehydro-4-deoxy-D-glucarate = 2-hydroxy-3-oxopropanoate + pyruvate. It carries out the reaction 2-dehydro-3-deoxy-D-glucarate = 2-hydroxy-3-oxopropanoate + pyruvate. It participates in carbohydrate acid metabolism; galactarate degradation; D-glycerate from galactarate: step 2/3. In terms of biological role, catalyzes the reversible retro-aldol cleavage of both 5-keto-4-deoxy-D-glucarate and 2-keto-3-deoxy-D-glucarate to pyruvate and tartronic semialdehyde. This Klebsiella pneumoniae subsp. pneumoniae (strain ATCC 700721 / MGH 78578) protein is 5-keto-4-deoxy-D-glucarate aldolase.